A 223-amino-acid chain; its full sequence is Ribonuclease DdI (223 aa).

Positions 1 to 25 (MRLIAALLSVLLIASTAQSTVTIYE) are cleaved as a signal peptide. Cysteines 46 and 51 form a disulfide. Residues histidine 63, glutamate 113, and histidine 117 contribute to the active site. Cysteine 78 and cysteine 120 are oxidised to a cystine. The N-linked (GlcNAc...) asparagine glycan is linked to asparagine 144. Cystine bridges form between cysteine 183–cysteine 213 and cysteine 194–cysteine 205.

Belongs to the RNase T2 family.

Its subcellular location is the lysosome. The catalysed reaction is a ribonucleotidyl-ribonucleotide-RNA + H2O = a 3'-end 3'-phospho-ribonucleotide-RNA + a 5'-end dephospho-ribonucleoside-RNA + H(+). Inhibited by Cu(2+) and Zn(2+). In terms of biological role, releases mononucleotides from RNA in the order of 3'-GMP &gt; 3'-UMP &gt; 3'-AMP &gt; 3'-CMP. The chain is Ribonuclease DdI (ddiA) from Dictyostelium discoideum (Social amoeba).